The chain runs to 95 residues: Co-chaperonin GroES (95 aa).

This sequence belongs to the GroES chaperonin family. In terms of assembly, heptamer of 7 subunits arranged in a ring. Interacts with the chaperonin GroEL.

The protein resides in the cytoplasm. Its function is as follows. Together with the chaperonin GroEL, plays an essential role in assisting protein folding. The GroEL-GroES system forms a nano-cage that allows encapsulation of the non-native substrate proteins and provides a physical environment optimized to promote and accelerate protein folding. GroES binds to the apical surface of the GroEL ring, thereby capping the opening of the GroEL channel. The chain is Co-chaperonin GroES from Caldicellulosiruptor bescii (strain ATCC BAA-1888 / DSM 6725 / KCTC 15123 / Z-1320) (Anaerocellum thermophilum).